An 863-amino-acid polypeptide reads, in one-letter code: Ubiquitin carboxyl-terminal hydrolase 13 (863 aa).

Position 114 is a phosphoserine (Ser-114). Position 122 is a phosphothreonine (Thr-122). The UBP-type; degenerate zinc finger occupies 187-295 (PVSKYANNLT…KHLAHFGIDM (109 aa)). Zn(2+) is bound by residues Cys-211, Cys-214, Cys-231, and His-244. Residue Lys-311 forms a Glycyl lysine isopeptide (Lys-Gly) (interchain with G-Cter in SUMO2) linkage. The 526-residue stretch at 336 to 861 (TGLKNLGNSC…LGYMYFYRRI (526 aa)) folds into the USP domain. Cys-345 acts as the Nucleophile in catalysis. A Glycyl lysine isopeptide (Lys-Gly) (interchain with G-Cter in SUMO2) cross-link involves residue Lys-405. 2 UBA domains span residues 652–693 (DIDE…IVVH) and 727–767 (QPPE…IFSH). His-823 (proton acceptor) is an active-site residue.

The protein belongs to the peptidase C19 family. Interacts with UFD1. Interacts (via UBA domains) with SIAH2 (when ubiquitinated). Interacts with BAG6; the interaction is direct and may mediate UBL4A deubiquitination. Interacts (via UBA 2 domain) with AMFR; the interaction is direct. Interacts with UBL4A; may be indirect via BAG6. Interacts with NEDD4.

The protein resides in the cytoplasm. The enzyme catalyses Thiol-dependent hydrolysis of ester, thioester, amide, peptide and isopeptide bonds formed by the C-terminal Gly of ubiquitin (a 76-residue protein attached to proteins as an intracellular targeting signal).. Its activity is regulated as follows. Specifically inhibited by spautin-1 (specific and potent autophagy inhibitor-1), a derivative of MBCQ that binds to USP13 and inhibits deubiquitinase activity. Regulated by PIK3C3/VPS34-containing complexes. The weak deubiquitinase activity in vitro suggests the existence of some mechanism that activates the enzyme. Functionally, deubiquitinase that mediates deubiquitination of target proteins such as BECN1, MITF, SKP2 and USP10 and is involved in various processes such as autophagy, endoplasmic reticulum-associated degradation (ERAD), cell cycle progression or DNA damage response. Component of a regulatory loop that controls autophagy and p53/TP53 levels: mediates deubiquitination of BECN1, a key regulator of autophagy, leading to stabilize the PIK3C3/VPS34-containing complexes. Alternatively, forms with NEDD4 a deubiquitination complex, which subsequently stabilizes VPS34 to promote autophagy. Also deubiquitinates USP10, an essential regulator of p53/TP53 stability. In turn, PIK3C3/VPS34-containing complexes regulate USP13 stability, suggesting the existence of a regulatory system by which PIK3C3/VPS34-containing complexes regulate p53/TP53 protein levels via USP10 and USP13. Recruited by nuclear UFD1 and mediates deubiquitination of SKP2, thereby regulating endoplasmic reticulum-associated degradation (ERAD). Also regulates ERAD through the deubiquitination of UBL4A a component of the BAG6/BAT3 complex. Mediates stabilization of SIAH2 independently of deubiquitinase activity: binds ubiquitinated SIAH2 and acts by impairing SIAH2 autoubiquitination. Regulates the cell cycle progression by stabilizing cell cycle proteins such as SKP2 and AURKB. In addition, plays an important role in maintaining genomic stability and in DNA replication checkpoint activation via regulation of RAP80 and TOPBP1. Deubiquitinates the multifunctional protein HMGB1 and subsequently drives its nucleocytoplasmic localization and its secretion. Positively regulates type I and type II interferon signalings by deubiquitinating STAT1 but negatively regulates antiviral response by deubiquitinating STING1. The protein is Ubiquitin carboxyl-terminal hydrolase 13 (USP13) of Bos taurus (Bovine).